The following is a 145-amino-acid chain: Large ribosomal subunit protein bL17 (145 aa).

This sequence belongs to the bacterial ribosomal protein bL17 family. As to quaternary structure, part of the 50S ribosomal subunit. Contacts protein L32.

In Orientia tsutsugamushi (strain Ikeda) (Rickettsia tsutsugamushi), this protein is Large ribosomal subunit protein bL17.